The chain runs to 261 residues: Thiazole synthase (261 aa).

Catalysis depends on Lys101, which acts as the Schiff-base intermediate with DXP. 1-deoxy-D-xylulose 5-phosphate contacts are provided by residues Gly162, 188-189 (AG), and 210-211 (NT).

Belongs to the ThiG family. In terms of assembly, homotetramer. Forms heterodimers with either ThiH or ThiS.

The protein localises to the cytoplasm. It catalyses the reaction [ThiS sulfur-carrier protein]-C-terminal-Gly-aminoethanethioate + 2-iminoacetate + 1-deoxy-D-xylulose 5-phosphate = [ThiS sulfur-carrier protein]-C-terminal Gly-Gly + 2-[(2R,5Z)-2-carboxy-4-methylthiazol-5(2H)-ylidene]ethyl phosphate + 2 H2O + H(+). The protein operates within cofactor biosynthesis; thiamine diphosphate biosynthesis. Catalyzes the rearrangement of 1-deoxy-D-xylulose 5-phosphate (DXP) to produce the thiazole phosphate moiety of thiamine. Sulfur is provided by the thiocarboxylate moiety of the carrier protein ThiS. In vitro, sulfur can be provided by H(2)S. The polypeptide is Thiazole synthase (Azoarcus sp. (strain BH72)).